Consider the following 931-residue polypeptide: GPI ethanolamine phosphate transferase 1 (931 aa).

Position 1 (Met-1) is a topological domain, cytoplasmic. A helical membrane pass occupies residues Leu-2–Phe-24. Residues Thr-25 to Phe-442 are Lumenal-facing. Asn-128, Asn-192, and Asn-350 each carry an N-linked (GlcNAc...) asparagine glycan. Residues Leu-443–Ile-463 traverse the membrane as a helical segment. At Lys-464–His-482 the chain is on the cytoplasmic side. A helical transmembrane segment spans residues Leu-483 to Ala-503. The Lumenal portion of the chain corresponds to Cys-504 to Tyr-508. Residues Tyr-509–Ile-529 traverse the membrane as a helical segment. The Cytoplasmic segment spans residues Gln-530–His-543. The helical transmembrane segment at Phe-544 to Tyr-564 threads the bilayer. Arg-565 is a topological domain (lumenal). A helical transmembrane segment spans residues Tyr-566–Thr-586. The Cytoplasmic segment spans residues Arg-587–Thr-591. The helical transmembrane segment at Ser-592–Gly-612 threads the bilayer. The Lumenal segment spans residues Arg-613–Ser-618. The chain crosses the membrane as a helical span at residues Leu-619 to Met-639. The Cytoplasmic portion of the chain corresponds to Lys-640–Glu-649. Residues Leu-650–Thr-670 traverse the membrane as a helical segment. The Lumenal segment spans residues Gln-671–Gln-685. A helical transmembrane segment spans residues Ile-686–Leu-706. At Phe-707 to Leu-723 the chain is on the cytoplasmic side. Residues Leu-724–Ile-744 form a helical membrane-spanning segment. The Lumenal segment spans residues Asn-745–Arg-786. A helical transmembrane segment spans residues Ala-787–Ile-807. The Cytoplasmic segment spans residues Asn-808–Pro-824. Residues Phe-825–Ala-845 traverse the membrane as a helical segment. At Phe-846–Lys-858 the chain is on the lumenal side. Residues Ser-859–Val-879 traverse the membrane as a helical segment. The Cytoplasmic portion of the chain corresponds to Lys-880–His-894. Residues Tyr-895–Leu-915 form a helical membrane-spanning segment. Over Thr-916–Met-931 the chain is Lumenal.

This sequence belongs to the PIGG/PIGN/PIGO family. PIGN subfamily.

The protein resides in the endoplasmic reticulum membrane. The protein operates within glycolipid biosynthesis; glycosylphosphatidylinositol-anchor biosynthesis. In terms of biological role, ethanolamine phosphate transferase that catalyzes an ethanolamine phosphate (EtNP) transfer from phosphatidylethanolamine (PE) to the 2-OH position of the first alpha-1,4-linked mannose of the alpha-D-Man-(1-&gt;6)-alpha-D-Man-(1-&gt;4)-alpha-D-GlcN-(1-&gt;6)-(1-radyl,2-acyl-sn-glycero-3-phospho)-2-acyl-inositol (also termed H3) intermediate to generate an alpha-D-Man-(1-&gt;6)-2-PEtn-alpha-D-Man-(1-&gt;4)-alpha-D-GlcN-(1-&gt;6)-(1-radyl,2-acyl-sn-glycero-3-phospho)-2-acyl-inositol and participates in the eighth step of the glycosylphosphatidylinositol-anchor biosynthesis. May act as suppressor of replication stress and chromosome missegregation. The polypeptide is GPI ethanolamine phosphate transferase 1 (Homo sapiens (Human)).